The chain runs to 203 residues: Proteasome subunit beta 2 (203 aa).

Residues 1–9 (MGEEVQIGA) constitute a propeptide, removed in mature form; by autocatalysis. Threonine 10 functions as the Nucleophile in the catalytic mechanism.

This sequence belongs to the peptidase T1B family. The 20S proteasome core is composed of 14 alpha and 14 beta subunits that assemble into four stacked heptameric rings, resulting in a barrel-shaped structure. The two inner rings, each composed of seven catalytic beta subunits, are sandwiched by two outer rings, each composed of seven alpha subunits. The catalytic chamber with the active sites is on the inside of the barrel. Has a gated structure, the ends of the cylinder being occluded by the N-termini of the alpha-subunits. Is capped at one or both ends by the proteasome regulatory ATPase, PAN.

The protein localises to the cytoplasm. It carries out the reaction Cleavage of peptide bonds with very broad specificity.. The formation of the proteasomal ATPase PAN-20S proteasome complex, via the docking of the C-termini of PAN into the intersubunit pockets in the alpha-rings, triggers opening of the gate for substrate entry. Interconversion between the open-gate and close-gate conformations leads to a dynamic regulation of the 20S proteasome proteolysis activity. Its function is as follows. Component of the proteasome core, a large protease complex with broad specificity involved in protein degradation. This Pyrobaculum aerophilum (strain ATCC 51768 / DSM 7523 / JCM 9630 / CIP 104966 / NBRC 100827 / IM2) protein is Proteasome subunit beta 2.